The sequence spans 1339 residues: Astrotactin-2 (1339 aa).

An N-terminal signal peptide occupies residues 1 to 49 (MAAAGARLSPGPGSGLRGRPRLCFHPGPPPLLPLLLLFLLLLPPPPLLA). Residues 50–206 (GATAAASREP…IVEEQMHILH (157 aa)) lie on the Lumenal side of the membrane. Residue Asn-168 is glycosylated (N-linked (GlcNAc...) asparagine). The chain crosses the membrane as a helical span at residues 207 to 227 (ISVMGGLIALLLLLLVFTVAL). The Cytoplasmic segment spans residues 228–434 (YAQRRWQKRR…KGLLKSPVNK (207 aa)). 2 disordered regions span residues 296–316 (EEDE…EFGS) and 363–408 (TPIE…ADDE). The chain crosses the membrane as a helical span at residues 435 to 455 (TALTLIAVSSCILAMVCGSQM). Over 456–1339 (SCPLTVKVTL…RNTYGESKGR (884 aa)) the chain is Lumenal. EGF-like domains lie at 510 to 550 (VRDL…HLCV), 651 to 695 (PVRD…SGCY), and 699 to 751 (KGID…KSCL). 9 cysteine pairs are disulfide-bonded: Cys-514–Cys-526, Cys-522–Cys-533, Cys-535–Cys-549, Cys-655–Cys-668, Cys-662–Cys-679, Cys-681–Cys-694, Cys-703–Cys-715, Cys-711–Cys-735, and Cys-737–Cys-750. Asn-770 and Asn-783 each carry an N-linked (GlcNAc...) asparagine glycan. Disulfide bonds link Cys-825/Cys-987, Cys-916/Cys-977, and Cys-983/Cys-990. Asn-1020 carries an N-linked (GlcNAc...) asparagine glycan. Intrachain disulfides connect Cys-1036–Cys-1047, Cys-1049–Cys-1062, Cys-1136–Cys-1158, Cys-1190–Cys-1277, and Cys-1298–Cys-1321. Residues 1065–1188 (LLQPVLRLSP…SELSTVTLRT (124 aa)) form the Fibronectin type-III domain.

Belongs to the astrotactin family. As to quaternary structure, interacts with ASTN1; the interaction is not calcium-dependent.

It is found in the membrane. The protein resides in the perikaryon. The protein localises to the cytoplasm. Its subcellular location is the cell cortex. It localises to the early endosome. It is found in the late endosome. The protein resides in the cytoplasmic vesicle. The protein localises to the clathrin-coated vesicle. Mediates recycling of the neuronal cell adhesion molecule ASTN1 to the anterior pole of the cell membrane in migrating neurons. Promotes ASTN1 internalization and intracellular transport of endocytosed ASTN1. Selectively binds inositol-4,5-bisphosphate, inositol-3,4,5-trisphosphate and inositol-1,3,4,5-tetrakisphosphate, suggesting it is recruited to membranes that contain lipids with a phosphoinositide headgroup. The chain is Astrotactin-2 (ASTN2) from Homo sapiens (Human).